Consider the following 939-residue polypeptide: Collagen-like protein 3 (939 aa).

N-linked (GlcNAc...) asparagine; by host glycosylation is found at asparagine 15, asparagine 35, asparagine 39, and asparagine 82. Residues serine 84 to proline 95 are compositionally biased toward low complexity. Disordered regions lie at residues serine 84–asparagine 332 and serine 358–alanine 697. Collagen-like domains lie at glycine 88 to lysine 147, glycine 148 to lysine 207, glycine 211 to leucine 330, glycine 364 to aspartate 423, glycine 427 to lysine 486, glycine 493 to lysine 552, glycine 564 to valine 622, and glycine 638 to alanine 697. Basic and acidic residues-rich tracts occupy residues lysine 96 to glutamate 110, aspartate 123 to isoleucine 182, aspartate 189 to leucine 230, aspartate 237 to proline 260, aspartate 267 to lysine 288, lysine 297 to glutamate 314, lysine 360 to leucine 371, aspartate 378 to leucine 416, aspartate 423 to isoleucine 491, aspartate 498 to isoleucine 527, lysine 537 to lysine 552, lysine 560 to isoleucine 580, and lysine 589 to aspartate 684. Asparagine 788, asparagine 820, asparagine 858, asparagine 919, and asparagine 925 each carry an N-linked (GlcNAc...) asparagine; by host glycan. Residues asparagine 896–glycine 923 are disordered. Gly residues predominate over residues tyrosine 910–glycine 923.

In terms of processing, may be hydroxylated on lysine by the viral-encoded procollagen-lysine,2-oxoglutarate 5-dioxygenase.

The protein localises to the virion. In terms of biological role, may participate in the formation of a layer of cross-linked glycosylated fibrils at the viral surface thus giving it a hairy-like appearance. The chain is Collagen-like protein 3 from Acanthamoeba polyphaga (Amoeba).